Here is a 548-residue protein sequence, read N- to C-terminus: Chaperonin GroEL (548 aa).

ATP-binding positions include 30 to 33, Lys51, 87 to 91, Gly415, 479 to 481, and Asp495; these read TLGP, DGTTT, and NAA. The tract at residues 524–548 is disordered; it reads LPKEDKSSDSNSSPAGGMGGMGGMM. The span at 539–548 shows a compositional bias: gly residues; sequence GGMGGMGGMM.

It belongs to the chaperonin (HSP60) family. Forms a cylinder of 14 subunits composed of two heptameric rings stacked back-to-back. Interacts with the co-chaperonin GroES.

The protein localises to the cytoplasm. It catalyses the reaction ATP + H2O + a folded polypeptide = ADP + phosphate + an unfolded polypeptide.. Functionally, together with its co-chaperonin GroES, plays an essential role in assisting protein folding. The GroEL-GroES system forms a nano-cage that allows encapsulation of the non-native substrate proteins and provides a physical environment optimized to promote and accelerate protein folding. The protein is Chaperonin GroEL of Buchnera aphidicola subsp. Myzus persicae (Myzus persicae primary endosymbiont).